Reading from the N-terminus, the 340-residue chain is Erythroferrone (340 aa).

Positions 1–24 (MASTRRPVGARTLLACASLLAAMG) are cleaved as a signal peptide. 3 disordered regions span residues 30-63 (SAEP…IAHA), 79-112 (SDKG…GPPG), and 141-161 (HCTR…PAAQ). Over residues 40-58 (PQPPGAELPAPPANSPPEP) the composition is skewed to pro residues. Residues 84 to 95 (NSKRRSKARRLK) are compositionally biased toward basic residues. A hydroxyproline mark is found at Pro-99, Pro-101, Pro-102, Pro-104, Pro-105, and Pro-107. The span at 99 to 112 (PGPPGPPGPQGPPG) shows a compositional bias: pro residues. Residues 145-154 (DLTTPASGSP) show a composition bias toward polar residues. In terms of domain architecture, C1q spans 185-340 (APRVEAAFHC…SHFSAILLGL (156 aa)). Asn-229, Asn-281, Asn-292, and Asn-319 each carry an N-linked (GlcNAc...) asparagine glycan.

Belongs to the adipolin/erythroferrone family. In terms of assembly, homodimer; disulfide-linked. Forms trimer, hexamers and higher molecular weight oligomers. May form heteromeric complexes with C1QTNF2 and C1QTNF12 and, to a lesser extent, with C1QTNF5 and C1QTNF10. Interacts with BMP5 and BMP7; the interaction inhibits BMP-induced transcription of HAMP. Interacts with BMP6; the interaction inhibits BMP-induced transcription of HAMP. Interacts with BMP2. Interacts with heterodimers composed of BMP2 and BMP6 in vitro, the interaction inhibits the heterodimer binding to its receptor BMPR1A /ALK3 and thereby suppresses expression of HAMP. N-glycosylated; required for secretion of the mature protein. In terms of tissue distribution, expressed in the soleus muscle in the leg (at protein level). Found in blood (at protein level). Weakly expressed in the heart (at protein level). Predominantly expressed in skeletal muscle and, at much lower levels, in other tissues, including lung, eye, smooth muscle, brain and kidney. Within skeletal muscles, higher expression levels in soleus as compared with plantaris. Expressed in osteoblasts, mature osteoclasts and erythroblasts. When fasting, females tend to have higher circulating levels than males. Obese mice tend to have lower expression and circulating levels as compared to lean animals. Following EPO treatment, only expressed in bone marrow and spleen.

The protein resides in the secreted. In terms of biological role, iron-regulatory hormone that acts as an erythroid regulator after hemorrhage: produced by erythroblasts following blood loss and mediates suppression of hepcidin (HAMP) expression in the liver, thereby promoting increased iron absorption and mobilization from stores. Promotes lipid uptake into adipocytes and hepatocytes via transcriptional up-regulation of genes involved in fatty acid uptake. Inhibits apoptosis and inflammatory response in cardiomyocytes via promotion of sphingosine-1-phosphate (S1P) and cAMP-dependent activation of AKT signaling. Inhibits autophagy induced by nutrient deficiency in hepatocytes via promoting the phosphorylation of IRS1, AKT, and MTOR, and thereby subsequent activation of the AKT-MTOR signaling pathway. Negatively regulates the differentiation of osteoblasts, potentially via sequestering BMP2, and thereby inhibits the activation of SMAD signaling. The reduction in BMP2 signaling in osteoblasts also results in an increase in expression of the osteoclastogenesis-promoting factors TNFSF11/RANKL and SOST, thereby indirectly promotes bone resorption. This Mus musculus (Mouse) protein is Erythroferrone.